The following is a 652-amino-acid chain: ATP-dependent RNA helicase DDX51 (652 aa).

Residues 1-145 form a disordered region; sequence MALFTINRYL…KAEKAEELTS (145 aa). Residues 25–34 show a composition bias toward low complexity; the sequence is KALLAKLQKQ. 2 stretches are compositionally biased toward basic and acidic residues: residues 66-77 and 107-122; these read LQETKGKIKKSE and VIVK…EKSV. The Q motif signature appears at 212–220; it reads FFPVQAEVI. The 209-residue stretch at 234 to 442 folds into the Helicase ATP-binding domain; the sequence is GPGGYRPRDV…LLDLHQPRLF (209 aa). 247–254 contacts ATP; sequence APTGSGKT. Positions 362–365 match the DEAD box motif; it reads DEAD. Positions 480 to 626 constitute a Helicase C-terminal domain; sequence IILHFLLRLK…KQHVHPEALK (147 aa).

The protein belongs to the DEAD box helicase family. DDX51/DBP6 subfamily.

The protein localises to the nucleus. The protein resides in the nucleolus. It carries out the reaction ATP + H2O = ADP + phosphate + H(+). ATP-binding RNA helicase involved in the biogenesis of 60S ribosomal subunits. This Danio rerio (Zebrafish) protein is ATP-dependent RNA helicase DDX51 (ddx51).